The sequence spans 343 residues: Protein phosphatase 2C homolog 7, mitochondrial (343 aa).

A mitochondrion-targeting transit peptide spans 1 to 39; that stretch reads MFANVGFRTLRVSRGPLYGSCSQIISFSKRTFYSSAKSG. The PPM-type phosphatase domain maps to 76–342; that stretch reads IYQKLKDSIR…DDITVVVVRV (267 aa). 3 residues coordinate Mn(2+): Asp109, Gly110, and Asp265.

Requires Mg(2+) as cofactor. The cofactor is Mn(2+).

Its subcellular location is the mitochondrion. The catalysed reaction is O-phospho-L-seryl-[protein] + H2O = L-seryl-[protein] + phosphate. It catalyses the reaction O-phospho-L-threonyl-[protein] + H2O = L-threonyl-[protein] + phosphate. Its function is as follows. Protein phosphatase which positively regulates biosynthesis of the ubiquinone, coenzyme Q. Dephosphorylates and activates the ubiquinone biosynthesis protein CAT5/COQ7. Also dephosphorylates CIT1 on 'Ser-462', which leads to its activation. The chain is Protein phosphatase 2C homolog 7, mitochondrial (PTC7) from Saccharomyces cerevisiae (strain ATCC 204508 / S288c) (Baker's yeast).